A 256-amino-acid chain; its full sequence is Probable fructose-2,6-bisphosphatase TIGAR A (256 aa).

Catalysis depends on His-11, which acts as the Tele-phosphohistidine intermediate. Glu-89 serves as the catalytic Proton donor/acceptor. A disordered region spans residues 147–170; sequence HQDKVQDGGTSSADESTEAPAGLA.

This sequence belongs to the phosphoglycerate mutase family.

The protein resides in the cytoplasm. It is found in the nucleus. The protein localises to the mitochondrion. The enzyme catalyses beta-D-fructose 2,6-bisphosphate + H2O = beta-D-fructose 6-phosphate + phosphate. Its function is as follows. Fructose-bisphosphatase hydrolyzing fructose-2,6-bisphosphate as well as fructose-1,6-bisphosphate. Acts as a negative regulator of glycolysis by lowering intracellular levels of fructose-2,6-bisphosphate in a p53/TP53-dependent manner, resulting in the pentose phosphate pathway (PPP) activation and NADPH production. Contributes to the generation of reduced glutathione to cause a decrease in intracellular reactive oxygen species (ROS) content, correlating with its ability to protect cells from oxidative or metabolic stress-induced cell death. May play a role in mitophagy inhibition. The protein is Probable fructose-2,6-bisphosphatase TIGAR A of Danio rerio (Zebrafish).